Reading from the N-terminus, the 945-residue chain is Oxysterol-binding protein homolog C23H4.01c (945 aa).

Residues 1–131 (METVEIRSKS…PKTVTFLLTA (131 aa)) form the GOLD domain. Positions 149–243 (KQIISGTLLK…WCNALEKAKN (95 aa)) constitute a PH domain. Ser288, Ser419, and Ser421 each carry phosphoserine. Disordered regions lie at residues 396-555 (ESGA…LPHS) and 846-894 (LEKD…MEEK). A compositionally biased stretch (low complexity) spans 443 to 454 (TSSISDTSSNSS). Residues 460–470 (LNATSLASTVD) are compositionally biased toward polar residues. The segment covering 482-499 (ESNKENDIKRKQPFHDLM) has biased composition (basic and acidic residues). Ser503 is subject to Phosphoserine.

Belongs to the OSBP family.

It localises to the cytoplasm. This is Oxysterol-binding protein homolog C23H4.01c from Schizosaccharomyces pombe (strain 972 / ATCC 24843) (Fission yeast).